A 515-amino-acid chain; its full sequence is GMP synthase [glutamine-hydrolyzing] (515 aa).

A Glutamine amidotransferase type-1 domain is found at 10–200 (TIIVLDFGSQ…VFGVCGCSEG (191 aa)). Cys87 functions as the Nucleophile in the catalytic mechanism. Active-site residues include His174 and Glu176. One can recognise a GMPS ATP-PPase domain in the interval 201–390 (WNMENFIEVE…LGIPDEIVWR (190 aa)). ATP is bound at residue 228-234 (SGGVDSS).

Homodimer.

It catalyses the reaction XMP + L-glutamine + ATP + H2O = GMP + L-glutamate + AMP + diphosphate + 2 H(+). The protein operates within purine metabolism; GMP biosynthesis; GMP from XMP (L-Gln route): step 1/1. Functionally, catalyzes the synthesis of GMP from XMP. The polypeptide is GMP synthase [glutamine-hydrolyzing] (Bacillus anthracis (strain A0248)).